A 121-amino-acid chain; its full sequence is Small ribosomal subunit protein uS13 (121 aa).

Residues 92-121 form a disordered region; that stretch reads RKGLPCRGQRTRTNARTRKGPRKAAQSLKK.

Belongs to the universal ribosomal protein uS13 family. In terms of assembly, part of the 30S ribosomal subunit. Forms a loose heterodimer with protein S19. Forms two bridges to the 50S subunit in the 70S ribosome.

Functionally, located at the top of the head of the 30S subunit, it contacts several helices of the 16S rRNA. In the 70S ribosome it contacts the 23S rRNA (bridge B1a) and protein L5 of the 50S subunit (bridge B1b), connecting the 2 subunits; these bridges are implicated in subunit movement. Contacts the tRNAs in the A and P-sites. This chain is Small ribosomal subunit protein uS13, found in Janthinobacterium sp. (strain Marseille) (Minibacterium massiliensis).